We begin with the raw amino-acid sequence, 118 residues long: Large ribosomal subunit protein uL22 (118 aa).

The protein belongs to the universal ribosomal protein uL22 family. As to quaternary structure, part of the 50S ribosomal subunit.

This protein binds specifically to 23S rRNA; its binding is stimulated by other ribosomal proteins, e.g. L4, L17, and L20. It is important during the early stages of 50S assembly. It makes multiple contacts with different domains of the 23S rRNA in the assembled 50S subunit and ribosome. Functionally, the globular domain of the protein is located near the polypeptide exit tunnel on the outside of the subunit, while an extended beta-hairpin is found that lines the wall of the exit tunnel in the center of the 70S ribosome. The sequence is that of Large ribosomal subunit protein uL22 from Chlorobium limicola (strain DSM 245 / NBRC 103803 / 6330).